The primary structure comprises 210 residues: Dephospho-CoA kinase (210 aa).

The region spanning 4–202 (WVGLTGGIGS…AFYSGIFASK (199 aa)) is the DPCK domain. 12–17 (GSGKSA) serves as a coordination point for ATP.

It belongs to the CoaE family.

The protein localises to the cytoplasm. The catalysed reaction is 3'-dephospho-CoA + ATP = ADP + CoA + H(+). It functions in the pathway cofactor biosynthesis; coenzyme A biosynthesis; CoA from (R)-pantothenate: step 5/5. In terms of biological role, catalyzes the phosphorylation of the 3'-hydroxyl group of dephosphocoenzyme A to form coenzyme A. This is Dephospho-CoA kinase from Neisseria gonorrhoeae (strain ATCC 700825 / FA 1090).